A 181-amino-acid polypeptide reads, in one-letter code: Adenine phosphoribosyltransferase (181 aa).

This sequence belongs to the purine/pyrimidine phosphoribosyltransferase family. Homodimer.

The protein localises to the cytoplasm. The catalysed reaction is AMP + diphosphate = 5-phospho-alpha-D-ribose 1-diphosphate + adenine. It participates in purine metabolism; AMP biosynthesis via salvage pathway; AMP from adenine: step 1/1. Its function is as follows. Catalyzes a salvage reaction resulting in the formation of AMP, that is energically less costly than de novo synthesis. The protein is Adenine phosphoribosyltransferase of Vibrio vulnificus (strain CMCP6).